We begin with the raw amino-acid sequence, 729 residues long: Heterogeneous nuclear ribonucleoprotein M (729 aa).

The span at 1–13 shows a compositional bias: low complexity; sequence MAAGVEAAAEVAA. A disordered region spans residues 1-65; it reads MAAGVEAAAE…GGNRFEPYSN (65 aa). Ala2 bears the N-acetylalanine mark. Lys17 participates in a covalent cross-link: Glycyl lysine isopeptide (Lys-Gly) (interchain with G-Cter in SUMO2). Ser29 carries the post-translational modification Phosphoserine. Glycyl lysine isopeptide (Lys-Gly) (interchain with G-Cter in SUMO2) cross-links involve residues Lys37, Lys68, and Lys82. The span at 37–49 shows a compositional bias: basic and acidic residues; the sequence is KGEERPTQNEKRK. 2 RRM domains span residues 70-148 and 203-280; these read YRAF…EDPD and STVF…MDER. Position 85 is a phosphoserine (Ser85). Glycyl lysine isopeptide (Lys-Gly) (interchain with G-Cter in SUMO2) cross-links involve residues Lys87 and Lys126. Lys133 is subject to N6-acetyllysine; alternate. Lys133 participates in a covalent cross-link: Glycyl lysine isopeptide (Lys-Gly) (interchain with G-Cter in SUMO2); alternate. Glycyl lysine isopeptide (Lys-Gly) (interchain with G-Cter in SUMO2) cross-links involve residues Lys142 and Lys144. Residue Ser203 is modified to Phosphoserine. Lys220 is covalently cross-linked (Glycyl lysine isopeptide (Lys-Gly) (interchain with G-Cter in SUMO2)). N6-acetyllysine; alternate is present on Lys276. Residue Lys276 forms a Glycyl lysine isopeptide (Lys-Gly) (interchain with G-Cter in SUMO2); alternate linkage. Residues Lys284 and Lys344 each participate in a glycyl lysine isopeptide (Lys-Gly) (interchain with G-Cter in SUMO2) cross-link. Residues Ser364 and Ser376 each carry the phosphoserine modification. Residues Lys380 and Lys387 each participate in a glycyl lysine isopeptide (Lys-Gly) (interchain with G-Cter in SUMO2) cross-link. At Ser396 the chain carries Phosphoserine. Tandem repeats lie at residues 399-404, 406-411, 414-419, and 425-430. A 27 X 6 AA repeats of [GEVSTPAN]-[ILMV]-[DE]-[RH]-[MLVI]-[GAV] region spans residues 399–607; sequence GIERMGPGID…ALGAGIERMG (209 aa). Ser431 is modified (phosphoserine). 3 consecutive repeat copies span residues 432-437, 439-444, and 445-450. The residue at position 451 (Ser451) is a Phosphoserine. 4 tandem repeats follow at residues 452–457, 460–465, 467–472, and 474–479. Ser467 carries the post-translational modification Phosphoserine. Position 480 is a phosphoserine (Ser480). 16 tandem repeats follow at residues 481-486, 492-497, 499-504, 506-511, 513-518, 520-525, 527-532, 539-544, 546-551, 553-558, 561-566, 567-571, 574-579, 580-584, 587-592, and 602-607. Arg495 is subject to Omega-N-methylarginine. Phosphoserine is present on Ser527. Ser574 is subject to Phosphoserine. Position 587 is a phosphoserine (Ser587). 3 positions are modified to phosphoserine: Ser617, Ser632, and Ser636. Residue Lys650 forms a Glycyl lysine isopeptide (Lys-Gly) (interchain with G-Cter in SUMO2) linkage. In terms of domain architecture, RRM 3 spans 652–728; the sequence is CQIFVRNLPF…REIDVRIDRN (77 aa). Thr664 bears the Phosphothreonine mark. Lys666 is covalently cross-linked (Glycyl lysine isopeptide (Lys-Gly) (interchain with G-Cter in SUMO2)). The residue at position 671 (Lys671) is an N6-acetyllysine. Residues Lys684 and Lys691 each participate in a glycyl lysine isopeptide (Lys-Gly) (interchain with G-Cter in SUMO2) cross-link. Lys697 carries the post-translational modification N6-acetyllysine; alternate. Lys697 participates in a covalent cross-link: Glycyl lysine isopeptide (Lys-Gly) (interchain with G-Cter in SUMO2); alternate. A Glycyl lysine isopeptide (Lys-Gly) (interchain with G-Cter in SUMO1); alternate cross-link involves residue Lys697. Phosphoserine is present on Ser700. Residue Lys715 forms a Glycyl lysine isopeptide (Lys-Gly) (interchain with G-Cter in SUMO2) linkage.

As to quaternary structure, identified in the spliceosome C complex. Interacts with PPIA/CYPA. In terms of processing, sumoylated.

The protein localises to the nucleus. Pre-mRNA binding protein in vivo, binds avidly to poly(G) and poly(U) RNA homopolymers in vitro. Involved in splicing. Acts as a receptor for carcinoembryonic antigen in Kupffer cells, may initiate a series of signaling events leading to tyrosine phosphorylation of proteins and induction of IL-1 alpha, IL-6, IL-10 and tumor necrosis factor alpha cytokines. The protein is Heterogeneous nuclear ribonucleoprotein M (Hnrnpm) of Mus musculus (Mouse).